Here is a 437-residue protein sequence, read N- to C-terminus: F-box only protein 9 (437 aa).

Residues 1-29 (MAEAEEDCHSEAVREGDDDDENESPAETD) are disordered. Acidic residues predominate over residues 16–26 (GDDDDENESPA). Residues 84 to 117 (ARELFLKAVEEEQNGALYEAIKFYRRAMQLVPDI) form a TPR repeat. Serine 126 is subject to Phosphoserine. The 52-residue stretch at 175 to 226 (QTHISALPMEVLMYVFRWVVSSDLDLRSLEQLSQVCRGFYICARDPEIWRLA) folds into the F-box domain.

As to quaternary structure, part of the SCF (SKP1-CUL1-F-box) E3 ubiquitin-protein ligase complex SCF(FBXO9) composed of CUL1, SKP1, RBX1 and FBXO9. Interacts with TTI1 and TELO2; when TTI1 and TELO2 are phosphorylated by CK2.

The protein localises to the cytoplasm. It participates in protein modification; protein ubiquitination. Substrate recognition component of a SCF (SKP1-CUL1-F-box protein) E3 ubiquitin-protein ligase complex which mediates the ubiquitination and subsequent proteasomal degradation of target proteins and plays a role in several biological processes such as cell cycle, cell proliferation, or maintenance of chromosome stability. Ubiquitinates mTORC1-bound TTI1 and TELO2 when they are phosphorylated by CK2 following growth factor deprivation, leading to their degradation. In contrast, does not mediate ubiquitination of TTI1 and TELO2 when they are part of the mTORC2 complex. As a consequence, mTORC1 is inactivated to restrain cell growth and protein translation, while mTORC2 is the activated due to the relief of feedback inhibition by mTORC1. Plays a role in maintaining epithelial cell survival by regulating the turn-over of chromatin modulator PRMT4 through ubiquitination and degradation by the proteasomal pathway. Also regulates PPARgamma stability by facilitating PPARgamma/PPARG ubiquitination and thereby plays a role in adipocyte differentiation. This Bos taurus (Bovine) protein is F-box only protein 9 (FBXO9).